Reading from the N-terminus, the 394-residue chain is Phosphoglycerate kinase (394 aa).

Substrate is bound by residues 21 to 23 (DFN), Arg-36, 59 to 62 (HLGR), Arg-118, and Arg-151. Ser-183 is modified (phosphoserine). ATP-binding residues include Lys-201 and Gly-292. The residue at position 299 (Thr-299) is a Phosphothreonine. ATP-binding positions include Glu-323 and 350–353 (GGDS).

This sequence belongs to the phosphoglycerate kinase family. In terms of assembly, monomer.

It localises to the cytoplasm. It carries out the reaction (2R)-3-phosphoglycerate + ATP = (2R)-3-phospho-glyceroyl phosphate + ADP. It participates in carbohydrate degradation; glycolysis; pyruvate from D-glyceraldehyde 3-phosphate: step 2/5. In Anoxybacillus flavithermus (strain DSM 21510 / WK1), this protein is Phosphoglycerate kinase.